The sequence spans 266 residues: Integral membrane protein 2B (266 aa).

Over 1–54 the chain is Cytoplasmic; sequence MVKVTFNSALAQKEAKKDEPKSSEEALIAPPDAVAVDCKDPDDVVPVGQRRAWC. The helical; Signal-anchor for type II membrane protein transmembrane segment at 55 to 75 threads the bilayer; it reads WCMCFGLAFMLAGVILGGAYL. The Lumenal portion of the chain corresponds to 76-266; the sequence is YKYFALQPDD…KFAVETLICS (191 aa). The necessary for interaction with APP and inhibitor effects on APP processing stretch occupies residues 102–134; the sequence is EPSADAPAARYQTIEENIKIFEEDAVEFISVPV. The region spanning 137–231 is the BRICHOS domain; it reads FADSDPANIV…LCHDKETYKL (95 aa). 2 cysteine pairs are disulfide-bonded: Cys164/Cys223 and Cys248/Cys265. Residue Asn170 is glycosylated (N-linked (GlcNAc...) asparagine).

This sequence belongs to the ITM2 family. As to quaternary structure, homodimer; disulfide-linked. Interacts with SPPL2A and SPPL2B. Interacts with APP. Mature BRI2 (mBRI2) interacts with the APP amyloid-beta A4 protein; the interaction occurs at the cell surface and in the endocytic compartments and enable alpha- and beta-secretase-induced APP cleavage inhibition. Mature BRI2 (mBRI2) interacts with the APP C99; the interaction occurs in the endocytic compartments and enable gamma-secretase-induced C99 cleavage inhibition. May form heterodimers with Bri23 peptide and APP amyloid-beta protein 40. Interacts with ADAM7 in sperm; the interaction increases following capacitation. Post-translationally, the ectodomain C-terminal part of the imBRI2 is processed by furin producing a secreted Bri23 peptide and a mature BRI2, membrane form (mBRI2). The remaining part of the ectodomain of mBRI2 containing the BRICHOS domain is cleaved by ADAM10 and is secreted (BRI2C, soluble form). The membrane-bound N-terminal fragment (BRI2C, membrane form) is further proteolytically processed by SPPL2A and SPPL2B through regulated intramembrane proteolysis producing a secreted C-peptide and a BRI2 intracellular domain (BRI2 ICD) released in the cytosol. Shedding by ADAM10 facilitates intramembrane cleavage but is not absolutely required for BRI2 ICD generation. In terms of processing, glycosylation at Asn-170 is important for cell surface localization, but doesn't affect furin- and ADAM10-induced proteolytic processing.

Its subcellular location is the golgi apparatus membrane. The protein localises to the cell membrane. It localises to the endosome membrane. The protein resides in the secreted. Its function is as follows. Plays a regulatory role in the processing of the amyloid-beta A4 precursor protein (APP) and acts as an inhibitor of the amyloid-beta peptide aggregation and fibrils deposition. Plays a role in the induction of neurite outgrowth. Functions as a protease inhibitor by blocking access of secretases to APP cleavage sites. Mature BRI2 (mBRI2) functions as a modulator of the amyloid-beta A4 precursor protein (APP) processing leading to a strong reduction in the secretion of secretase-processed amyloid-beta protein 40 and amyloid-beta protein 42. Functionally, bri23 peptide prevents aggregation of APP amyloid-beta protein 42 into toxic oligomers. The chain is Integral membrane protein 2B (Itm2b) from Rattus norvegicus (Rat).